A 541-amino-acid chain; its full sequence is MKALVENLKATARETDATDIRAAFAADPNRFSRFSTALDDLLFDYSKCAVNDRIIDGLEALAKAAKVEEKRDAMFRGDIINITEERAVLHTALRNRSNRPVLVDGKNVVPDVNAVLEAMGRFADHVRSGDLKGATGKKITDVVNIGIGGSDLGPVMATLALAPFHDGPRLHFVSNVDGAHIADTLKLLDAETSLFIVASKTFTTIETMTNAATARAFIAGKLGEAAVGHHFAAVSTALDKVGAFGINAARVFGFWDWVGGRYSIWSAIGLPLMIAIGKENFGRFLDGGHSMDEHFRAAPLRQNIPVLLGLIGFYNRNVLGYPSRAILPYDQRLTRFPAYLQQLDMESNGKGVTLESQPVEFSTGPVVWGEPGTNGQHAFYQLIHQGTDIIPAEFMIAAKGHEKDLRHQHQLLIANCLAQSEALMKGRTLAEAKAQLTSKGMDEAKADKIAPHRVFTGNRPSLTIVYDQLDPFALGRLIALYEHRVFVEGALFNINSFDQWGVELGKELATGLLPVVEGRESAEGHDSSTTGLVAALLKAAR.

Catalysis depends on glutamate 346, which acts as the Proton donor. Residues histidine 377 and lysine 506 contribute to the active site.

Belongs to the GPI family.

The protein resides in the cytoplasm. It catalyses the reaction alpha-D-glucose 6-phosphate = beta-D-fructose 6-phosphate. It participates in carbohydrate biosynthesis; gluconeogenesis. Its pathway is carbohydrate degradation; glycolysis; D-glyceraldehyde 3-phosphate and glycerone phosphate from D-glucose: step 2/4. In terms of biological role, catalyzes the reversible isomerization of glucose-6-phosphate to fructose-6-phosphate. This chain is Glucose-6-phosphate isomerase, found in Sinorhizobium medicae (strain WSM419) (Ensifer medicae).